The chain runs to 361 residues: Phospho-N-acetylmuramoyl-pentapeptide-transferase (361 aa).

Helical transmembrane passes span 27-47 (GAMV…IDHL), 72-92 (TPTM…LLWA), 94-114 (LHNP…FVGF), 133-153 (LRLA…IWAG), 169-189 (FAIN…VGAG), 200-220 (GLAI…AYLV), 240-260 (LAVL…FNAP), 264-284 (IFMG…IAVA), 289-309 (IVLA…IVQV), and 338-358 (QIVI…LSTL).

The protein belongs to the glycosyltransferase 4 family. MraY subfamily. Requires Mg(2+) as cofactor.

It is found in the cell inner membrane. It carries out the reaction UDP-N-acetyl-alpha-D-muramoyl-L-alanyl-gamma-D-glutamyl-meso-2,6-diaminopimeloyl-D-alanyl-D-alanine + di-trans,octa-cis-undecaprenyl phosphate = di-trans,octa-cis-undecaprenyl diphospho-N-acetyl-alpha-D-muramoyl-L-alanyl-D-glutamyl-meso-2,6-diaminopimeloyl-D-alanyl-D-alanine + UMP. It participates in cell wall biogenesis; peptidoglycan biosynthesis. Functionally, catalyzes the initial step of the lipid cycle reactions in the biosynthesis of the cell wall peptidoglycan: transfers peptidoglycan precursor phospho-MurNAc-pentapeptide from UDP-MurNAc-pentapeptide onto the lipid carrier undecaprenyl phosphate, yielding undecaprenyl-pyrophosphoryl-MurNAc-pentapeptide, known as lipid I. The chain is Phospho-N-acetylmuramoyl-pentapeptide-transferase from Afipia carboxidovorans (strain ATCC 49405 / DSM 1227 / KCTC 32145 / OM5) (Oligotropha carboxidovorans).